A 176-amino-acid chain; its full sequence is Protein GrpE (176 aa).

Belongs to the GrpE family. As to quaternary structure, homodimer.

It is found in the cytoplasm. Functionally, participates actively in the response to hyperosmotic and heat shock by preventing the aggregation of stress-denatured proteins, in association with DnaK and GrpE. It is the nucleotide exchange factor for DnaK and may function as a thermosensor. Unfolded proteins bind initially to DnaJ; upon interaction with the DnaJ-bound protein, DnaK hydrolyzes its bound ATP, resulting in the formation of a stable complex. GrpE releases ADP from DnaK; ATP binding to DnaK triggers the release of the substrate protein, thus completing the reaction cycle. Several rounds of ATP-dependent interactions between DnaJ, DnaK and GrpE are required for fully efficient folding. The polypeptide is Protein GrpE (Thermoplasma volcanium (strain ATCC 51530 / DSM 4299 / JCM 9571 / NBRC 15438 / GSS1)).